We begin with the raw amino-acid sequence, 146 residues long: UPF0756 membrane protein PTH_1817 (146 aa).

The next 4 membrane-spanning stretches (helical) occupy residues 6–26, 46–66, 69–89, and 105–125; these read LLIG…ILLI, MGLT…KASW, IISS…ALAT, and IVFG…GIPV.

Belongs to the UPF0756 family.

The protein localises to the cell membrane. The sequence is that of UPF0756 membrane protein PTH_1817 from Pelotomaculum thermopropionicum (strain DSM 13744 / JCM 10971 / SI).